The primary structure comprises 211 residues: 3,4-dihydroxy-2-butanone 4-phosphate synthase (211 aa).

D-ribulose 5-phosphate-binding positions include 37–38 (RE), D42, 150–154 (RGGHT), and E174. Residue E38 coordinates Mg(2+). H153 contributes to the Mg(2+) binding site.

Belongs to the DHBP synthase family. In terms of assembly, homodimer. Requires Mg(2+) as cofactor. Mn(2+) serves as cofactor.

It carries out the reaction D-ribulose 5-phosphate = (2S)-2-hydroxy-3-oxobutyl phosphate + formate + H(+). It participates in cofactor biosynthesis; riboflavin biosynthesis; 2-hydroxy-3-oxobutyl phosphate from D-ribulose 5-phosphate: step 1/1. Functionally, catalyzes the conversion of D-ribulose 5-phosphate to formate and 3,4-dihydroxy-2-butanone 4-phosphate. This chain is 3,4-dihydroxy-2-butanone 4-phosphate synthase, found in Baumannia cicadellinicola subsp. Homalodisca coagulata.